The sequence spans 666 residues: ESX-1 secretion-associated protein EspI (666 aa).

Over residues 1 to 15 the composition is skewed to basic and acidic residues; it reads MAADYDKLFRPHEGM. A disordered region spans residues 1–378; it reads MAADYDKLFR…ATKPPKVVSQ (378 aa). The span at 22 to 31 shows a compositional bias: low complexity; sequence AAQPFFDPSA. Pro residues-rich tracts occupy residues 64–80, 87–144, and 188–205; these read APPP…PTPM, PPSP…PAPT, and PAPP…PAPS. The span at 222–231 shows a compositional bias: basic residues; it reads HSRRARRGHR. Pro residues predominate over residues 284-297; that stretch reads PTRPAPTEPPPSPS. Positions 357 to 371 are enriched in basic residues; that stretch reads PKVKKVKPQKPKATK. Position 424–431 (424–431) interacts with ATP; that stretch reads LKGGAGKT.

Required to repress ESX-1-mediated secretion under low ATP conditions. This function requires the ATP-binding motif. This chain is ESX-1 secretion-associated protein EspI, found in Mycobacterium tuberculosis (strain CDC 1551 / Oshkosh).